The following is a 230-amino-acid chain: Small ribosomal subunit protein uS3c (230 aa).

A KH type-2 domain is found at Ile-39–Ala-109.

The protein belongs to the universal ribosomal protein uS3 family. Part of the 30S ribosomal subunit.

The protein resides in the plastid. It localises to the chloroplast. This chain is Small ribosomal subunit protein uS3c (rps3), found in Pyropia yezoensis (Susabi-nori).